A 396-amino-acid chain; its full sequence is Ribosomal RNA large subunit methyltransferase I (396 aa).

In terms of domain architecture, PUA spans 2–81 (SVRLVLAKGR…ESIDIAFFTR (80 aa)).

Belongs to the methyltransferase superfamily. RlmI family.

It is found in the cytoplasm. It carries out the reaction cytidine(1962) in 23S rRNA + S-adenosyl-L-methionine = 5-methylcytidine(1962) in 23S rRNA + S-adenosyl-L-homocysteine + H(+). Specifically methylates the cytosine at position 1962 (m5C1962) of 23S rRNA. This chain is Ribosomal RNA large subunit methyltransferase I, found in Escherichia coli (strain UTI89 / UPEC).